We begin with the raw amino-acid sequence, 201 residues long: ATP-dependent Clp protease proteolytic subunit (201 aa).

Residue Ser-105 is the Nucleophile of the active site. His-130 is a catalytic residue.

It belongs to the peptidase S14 family. In terms of assembly, fourteen ClpP subunits assemble into 2 heptameric rings which stack back to back to give a disk-like structure with a central cavity, resembling the structure of eukaryotic proteasomes.

The protein resides in the cytoplasm. It catalyses the reaction Hydrolysis of proteins to small peptides in the presence of ATP and magnesium. alpha-casein is the usual test substrate. In the absence of ATP, only oligopeptides shorter than five residues are hydrolyzed (such as succinyl-Leu-Tyr-|-NHMec, and Leu-Tyr-Leu-|-Tyr-Trp, in which cleavage of the -Tyr-|-Leu- and -Tyr-|-Trp bonds also occurs).. In terms of biological role, cleaves peptides in various proteins in a process that requires ATP hydrolysis. Has a chymotrypsin-like activity. Plays a major role in the degradation of misfolded proteins. This is ATP-dependent Clp protease proteolytic subunit from Acinetobacter baylyi (strain ATCC 33305 / BD413 / ADP1).